Reading from the N-terminus, the 124-residue chain is Large ribosomal subunit protein bL19 (124 aa).

Belongs to the bacterial ribosomal protein bL19 family.

Its function is as follows. This protein is located at the 30S-50S ribosomal subunit interface and may play a role in the structure and function of the aminoacyl-tRNA binding site. In Orientia tsutsugamushi (strain Ikeda) (Rickettsia tsutsugamushi), this protein is Large ribosomal subunit protein bL19.